Here is a 239-residue protein sequence, read N- to C-terminus: Large ribosomal subunit protein uL2 (239 aa).

Disordered regions lie at residues 1–28 (MGKRILPQRMGRGTPTFRSPSHRRVGPA) and 199–239 (SHPH…RRKG). Positions 225 to 239 (KVGHIAARRTGRRKG) are enriched in basic residues.

The protein belongs to the universal ribosomal protein uL2 family. In terms of assembly, part of the 50S ribosomal subunit. Forms a bridge to the 30S subunit in the 70S ribosome.

One of the primary rRNA binding proteins. Required for association of the 30S and 50S subunits to form the 70S ribosome, for tRNA binding and peptide bond formation. It has been suggested to have peptidyltransferase activity; this is somewhat controversial. Makes several contacts with the 16S rRNA in the 70S ribosome. The sequence is that of Large ribosomal subunit protein uL2 from Staphylothermus marinus (strain ATCC 43588 / DSM 3639 / JCM 9404 / F1).